A 326-amino-acid chain; its full sequence is Nicotianamine synthase 2 (326 aa).

It belongs to the nicotianamine synthase (NAS)-like family. As to expression, expressed in roots.

The catalysed reaction is 3 S-adenosyl-L-methionine = nicotianamine + 3 S-methyl-5'-thioadenosine + 3 H(+). Its function is as follows. Synthesizes nicotianamine, a polyamine that is the first intermediate in the synthesis of the phytosiderophores of the mugineic acid type found in gramineae which serve as a sensor for the physiological iron status within the plant, and/or might be involved in the transport of iron. The protein is Nicotianamine synthase 2 (NAS2) of Oryza sativa subsp. japonica (Rice).